The sequence spans 110 residues: T cell receptor alpha variable 22 (110 aa).

The signal sequence occupies residues 1 to 21 (MKRILGALLGLLSAQVCCVRG). One can recognise an Ig-like domain in the interval 22–110 (IQVEQSPPDL…DSGVYFCAVE (89 aa)). Residues Asn38 and Asn44 are each glycosylated (N-linked (GlcNAc...) asparagine). A disulfide bond links Cys43 and Cys107.

In terms of assembly, alpha-beta TR is a heterodimer composed of an alpha and beta chain; disulfide-linked. The alpha-beta TR is associated with the transmembrane signaling CD3 coreceptor proteins to form the TR-CD3 (TcR or TCR). The assembly of alpha-beta TR heterodimers with CD3 occurs in the endoplasmic reticulum where a single alpha-beta TR heterodimer associates with one CD3D-CD3E heterodimer, one CD3G-CD3E heterodimer and one CD247 homodimer forming a stable octameric structure. CD3D-CD3E and CD3G-CD3E heterodimers preferentially associate with TR alpha and TR beta chains, respectively. The association of the CD247 homodimer is the last step of TcR assembly in the endoplasmic reticulum and is required for transport to the cell surface.

The protein resides in the cell membrane. Its function is as follows. V region of the variable domain of T cell receptor (TR) alpha chain that participates in the antigen recognition. Alpha-beta T cell receptors are antigen specific receptors which are essential to the immune response and are present on the cell surface of T lymphocytes. Recognize peptide-major histocompatibility (MH) (pMH) complexes that are displayed by antigen presenting cells (APC), a prerequisite for efficient T cell adaptive immunity against pathogens. Binding of alpha-beta TR to pMH complex initiates TR-CD3 clustering on the cell surface and intracellular activation of LCK that phosphorylates the ITAM motifs of CD3G, CD3D, CD3E and CD247 enabling the recruitment of ZAP70. In turn ZAP70 phosphorylates LAT, which recruits numerous signaling molecules to form the LAT signalosome. The LAT signalosome propagates signal branching to three major signaling pathways, the calcium, the mitogen-activated protein kinase (MAPK) kinase and the nuclear factor NF-kappa-B (NF-kB) pathways, leading to the mobilization of transcription factors that are critical for gene expression and essential for T cell growth and differentiation. The T cell repertoire is generated in the thymus, by V-(D)-J rearrangement. This repertoire is then shaped by intrathymic selection events to generate a peripheral T cell pool of self-MH restricted, non-autoaggressive T cells. Post-thymic interaction of alpha-beta TR with the pMH complexes shapes TR structural and functional avidity. The protein is T cell receptor alpha variable 22 of Homo sapiens (Human).